The sequence spans 834 residues: Striatin-interacting protein 2 (834 aa).

The interval 1-48 (MEDPAAPGTGGPPANGNGNGGGKGKQAAPKGREAFRSQRRESEGSVDC) is disordered. A compositionally biased stretch (gly residues) spans 8–24 (GTGGPPANGNGNGGGKG). Positions 30 to 43 (KGREAFRSQRRESE) are enriched in basic and acidic residues. Phosphoserine occurs at positions 318, 329, and 354. The disordered stretch occupies residues 321 to 345 (SYTLDLGESQLAPPPSKLRGRRGSR). Residues 360–382 (ERDLFKTEEPATEEEEESAGDGE) form a disordered region. A compositionally biased stretch (acidic residues) spans 369–379 (PATEEEEESAG).

Belongs to the STRIP family. Part of the core of STRIPAK complexes composed of PP2A catalytic and scaffolding subunits, the striatins (PP2A regulatory subunits), the striatin-associated proteins MOB4, STRIP1 and STRIP2, PDCD10 and members of the STE20 kinases, such as STK24 and STK26. Interacts with CTTNBP2NL.

It is found in the cytoplasm. Its function is as follows. Plays a role in the regulation of cell morphology and cytoskeletal organization. Required in the control of cell shape. Calmodulin-binding scaffolding protein which is the center of the striatin-interacting phosphatase and kinase (STRIPAK) complexes. STRIPAK complexes have critical roles in protein (de)phosphorylation and are regulators of multiple signaling pathways including Hippo, MAPK, nuclear receptor and cytoskeleton remodeling. Different types of STRIPAK complexes are involved in a variety of biological processes such as cell growth, differentiation, apoptosis, metabolism and immune regulation. This chain is Striatin-interacting protein 2, found in Homo sapiens (Human).